The primary structure comprises 676 residues: DNA ligase (676 aa).

Residues 35–39, 84–85, and Glu118 contribute to the NAD(+) site; these read DAEYD and SL. Lys120 serves as the catalytic N6-AMP-lysine intermediate. NAD(+) contacts are provided by Arg141, Glu176, Lys284, and Lys308. Residues Cys402, Cys405, Cys420, and Cys426 each coordinate Zn(2+). The BRCT domain occupies 595–676; it reads SYLSLIHGKI…WLQYTQSSEN (82 aa).

It belongs to the NAD-dependent DNA ligase family. LigA subfamily. Mg(2+) is required as a cofactor. It depends on Mn(2+) as a cofactor.

It carries out the reaction NAD(+) + (deoxyribonucleotide)n-3'-hydroxyl + 5'-phospho-(deoxyribonucleotide)m = (deoxyribonucleotide)n+m + AMP + beta-nicotinamide D-nucleotide.. In terms of biological role, DNA ligase that catalyzes the formation of phosphodiester linkages between 5'-phosphoryl and 3'-hydroxyl groups in double-stranded DNA using NAD as a coenzyme and as the energy source for the reaction. It is essential for DNA replication and repair of damaged DNA. In Ehrlichia chaffeensis (strain ATCC CRL-10679 / Arkansas), this protein is DNA ligase.